Consider the following 783-residue polypeptide: Endonuclease MutS2 (783 aa).

Residue 337 to 344 (GPNTGGKT) participates in ATP binding. Residues 708–783 (LHLRGYRYEE…GFGVTVAELK (76 aa)) enclose the Smr domain.

This sequence belongs to the DNA mismatch repair MutS family. MutS2 subfamily. As to quaternary structure, homodimer. Binds to stalled ribosomes, contacting rRNA.

Functionally, endonuclease that is involved in the suppression of homologous recombination and thus may have a key role in the control of bacterial genetic diversity. Its function is as follows. Acts as a ribosome collision sensor, splitting the ribosome into its 2 subunits. Detects stalled/collided 70S ribosomes which it binds and splits by an ATP-hydrolysis driven conformational change. Acts upstream of the ribosome quality control system (RQC), a ribosome-associated complex that mediates the extraction of incompletely synthesized nascent chains from stalled ribosomes and their subsequent degradation. Probably generates substrates for RQC. This is Endonuclease MutS2 from Staphylococcus haemolyticus (strain JCSC1435).